The chain runs to 255 residues: MDYSNFGNSASKKFQDDTLNRVRKEHEEALKKLREENFSSNTSELGNKKHYRAQERMSSPLHRLSPTGKSDDRKVKSPLDDKLRRQLREGNTRLPPPPFSSYGMPPTNRSNLDRIRRRTSSPVRTDKFASQNVIDDQRLEIKYLERIVYDQGTVIDNLTSRITRLESFILNSISDRGDKNFASLEHSRSFSGFPTNKTYGLQMGGLYENDMPYRRSSDNINKEGAREDRSSQIHIENESTEDILKNIVFVFSQLN.

The span at 1–12 shows a compositional bias: polar residues; that stretch reads MDYSNFGNSASK. 3 disordered regions span residues 1–20, 31–123, and 210–231; these read MDYS…DTLN, KKLR…SSPV, and DMPY…DRSS. Thr18 carries the phosphothreonine modification. A Phosphoserine modification is found at Ser65. Basic and acidic residues-rich tracts occupy residues 69-91 and 211-231; these read KSDD…REGN and MPYR…DRSS. Phosphothreonine; by MPS1 is present on Thr240.

The protein belongs to the SPC29 family. Component of the SPC110 complex containing at least CMD1, SPC29, SPC42 and SCP110. Interacts with BBP1. In terms of processing, MPS1-mediated phosphorylation at Thr-240 is required for spindle pole body duplication.

It is found in the nucleus. The protein localises to the cytoplasm. Its subcellular location is the cytoskeleton. The protein resides in the microtubule organizing center. It localises to the spindle pole body. Component of the spindle pole body (SPB) required for the proper execution of spindle pole body (SPB) duplication. Links the central plaque component SPC42 to the inner plaque component SPC110. The chain is Spindle pole component 29 (SPC29) from Saccharomyces cerevisiae (strain AWRI796) (Baker's yeast).